Reading from the N-terminus, the 553-residue chain is Interleukin-20 receptor subunit alpha (553 aa).

The first 29 residues, 1-29 (MRAPGRPALRPLPLPPLLLLLLAAPWGRA), serve as a signal peptide directing secretion. Residues 30–250 (VPCVSGGLPK…KDQSSEFKAK (221 aa)) are Extracellular-facing. 2 consecutive Fibronectin type-III domains span residues 37–135 (LPKP…FLET) and 136–242 (QIGP…TLKD). N-linked (GlcNAc...) asparagine glycosylation is found at Asn-42, Asn-83, Asn-91, Asn-182, Asn-191, and Asn-200. A disulfide bridge links Cys-87 with Cys-95. The cysteines at positions 215 and 236 are disulfide-linked. Residues 251–271 (IIFWYVLPVSITVFLFSVMGY) form a helical membrane-spanning segment. Over 272 to 553 (SIYRYIHVGK…EWGLYVQMEN (282 aa)) the chain is Cytoplasmic. Disordered stretches follow at residues 333-353 (SSDV…PPQE) and 462-515 (QEHT…LGEE). Residues 334-346 (SDVSSLNDPQPSG) are compositionally biased toward polar residues. Positions 499-513 (QDSEGCEPSEGDGLG) are enriched in acidic residues.

This sequence belongs to the type II cytokine receptor family. In terms of assembly, heterodimer with IL20RB and heterodimer with IL10RB. As to expression, widely expressed with highest levels in skin and testis and high levels in brain. Highly expressed in psoriatic skin.

The protein resides in the membrane. Its function is as follows. The IL20RA/IL20RB dimer is a receptor for IL19, IL20 and IL24. The IL20RA/IL10RB dimer is a receptor for IL26. In Homo sapiens (Human), this protein is Interleukin-20 receptor subunit alpha (IL20RA).